The following is a 260-amino-acid chain: Protein SVS1 (260 aa).

The N-terminal stretch at 1-19 is a signal peptide; the sequence is MIFKILCSLLLVTSNFASA. N-linked (GlcNAc...) asparagine glycosylation is found at N23, N249, and N256.

Functionally, required for vanadate resistance. This Saccharomyces cerevisiae (strain ATCC 204508 / S288c) (Baker's yeast) protein is Protein SVS1 (SVS1).